We begin with the raw amino-acid sequence, 414 residues long: Arginine deiminase (414 aa).

The active-site Amidino-cysteine intermediate is C402.

Belongs to the arginine deiminase family.

It localises to the cytoplasm. It catalyses the reaction L-arginine + H2O = L-citrulline + NH4(+). It functions in the pathway amino-acid degradation; L-arginine degradation via ADI pathway; carbamoyl phosphate from L-arginine: step 1/2. The polypeptide is Arginine deiminase (Oenococcus oeni (strain ATCC BAA-331 / PSU-1)).